The sequence spans 67 residues: Small ribosomal subunit protein eS17 (67 aa).

This sequence belongs to the eukaryotic ribosomal protein eS17 family.

The polypeptide is Small ribosomal subunit protein eS17 (Pyrococcus horikoshii (strain ATCC 700860 / DSM 12428 / JCM 9974 / NBRC 100139 / OT-3)).